A 300-amino-acid polypeptide reads, in one-letter code: Beta-lactamase (300 aa).

The first 29 residues, 1-29, serve as a signal peptide directing secretion; that stretch reads MTMFKTTFRQTATIAVSLISLLVSPMLWA. The Acyl-ester intermediate role is filled by Ser-75. 239-241 contacts substrate; the sequence is KTG.

This sequence belongs to the class-A beta-lactamase family. Monomer.

It catalyses the reaction a beta-lactam + H2O = a substituted beta-amino acid. Hydrolyzes broad-spectrum beta-lactam antibiotics. Active against cephalosporins such as cefuroxime and cefotaxime. This Proteus vulgaris protein is Beta-lactamase (blaB).